The following is a 204-amino-acid chain: RNA-free ribonuclease P (204 aa).

This sequence belongs to the HARP family.

It catalyses the reaction Endonucleolytic cleavage of RNA, removing 5'-extranucleotides from tRNA precursor.. In terms of biological role, RNA-free RNase P that catalyzes the removal of the 5'-leader sequence from pre-tRNA to produce the mature 5'-terminus. The sequence is that of RNA-free ribonuclease P from Pyrococcus horikoshii (strain ATCC 700860 / DSM 12428 / JCM 9974 / NBRC 100139 / OT-3).